The primary structure comprises 1755 residues: METRSSKTRRSLASRTNECQGTMWAPTSPPAGSSSPSQPTWKSSLYSSLAYSEAFHYSFAARPRRLTQLALAQRPEPQLLRLRPSSLRTQDISHLLTGVFRNLYSAEVIGDEVSASLIKARGSENERHEEFVDQLQQIRELYKQRLDEFEMLERHITQAQARAIAENERVMSQAGVQDLESLVRLPPVKSVSRWCIDSELLRKHHLISPEDYYTDTVPFHSAPKGISLPGCSKLTFSCEKRSVQKKELNKKLEDSCRKKLAEFEDELDHTVDSLTWNLTPKAKERTREPLKKASQPRNKNWMNHLRVPQRELDRLLLARMESRNHFLKNPRFFPPNTRYGGKSLVFPPKKPAPIGEFQSTEPEQSCADTPVFLAKPPIGFFTDYEIGPVYEMVIALQNTTTTSRYLRVLPPSTPYFALGLGMFPGKGGMVAPGMTCQYIVQFFPDCLGDFDDFILVETQSAHTLLIPLQARRPPPVLTLSPVLDCGYCLIGGVKMTRFICKNVGFSVGRFCIMPKTSWPPLSFKAIATVGFVEQPPFGILPSVFELAPGHAILVEVLFSPKSLGKAEQTFIIMCDNCQIKELVTIGIGQLIALDLIYISGEKSQPDPGELTDLTAQHFIRFEPENLRSTARKQLIIRNATHVELAFYWQIMKPNLQPLMPGETFSMDSIKCYPDKETAFSIMPRKGVLSPHTDHEFILSFSPHELRDFHSVLQMVLEEVPEPVSSEAESLGHSSYSVDDVIVLEIEVKGSVEPFQVLLEPYALIIPGENYIGINVKKAFKMWNNSKSPIRYLWGKISDCHIIEVEPGTGVIEPSEVGDFELNFTGGVPGPTSQDLLCEIEDSPSPVVLHIEAVFKGPALIINVSALQFGLLRLGQKATNSIQIRNVSQLPATWRMKESPVSLQERPEDVSPFDIEPSSGQLHSLGECRVDITLEALHCQHLETVLELEVENGAWSYLPVYAEVQKPHVYLQSSQVEVRNLYLGVPTKTTITLINGTLLPTQFHWGKLLGHQAEFCMVTVSPKHGLLGPSEECQLKLELTAHTQEELTHLALPCHVSGMKKPLVLGISGKPQGLQVAITISKESSDCSTEQWPGHPKELRLDFGSAVPLRTRVTRQLILTNRSPIRTRFSLKFEYFGSPQNSLSKKTSLPNMPPALLKTVRMQEHLAKREQLDFMESMLSHGKGAAFFPHFSQGMLGPYQQLCIDITGCANMWGEYWDNLICTVGDLLPEVIPVHMAAVGCPISSLRTTSYTIDQAQKEPAMRFGTQVSGGDTVTRTLRLNNSSPCDIRLDWETYVPEDKEDRLVELLVFYGPPFPLRDQAGNELVCPDTPEGGCLLWSPGPSSSSEFSHETDSSVEGSSSASNRVAQKLISVILQAHEGVPSGHLYCISPKQVVVPAGGSSTIYISFTPMVLSPEILHKVECTGYALGFMSLDSKVEREIPGKRHRLQDFAVGPLKLDLHSYVRPAQLSVELDYGGSMEFQCQASDLIPEQPCSGVLSELVTTHHLKLTNTTEIPHYFRLMVSRPFSVSQDGASQDHRAPGPGQKQECEEETASADKQLVLQAQENMLVNVSFSLSLELLSYQKLPADQTLPGVDIQQSASGEREMVFTQNLLLEYTNQTTQVVPLRAVVAVPELQLSTSWVDFGTCFVSQQRVREVYLMNLSGCRSYWTMLMGQQEPAKAAVAFRVSPNSGLLEARSANAPPTSIALQVFFTARSSELYESTMVVEGVLGEKSCTLRLRGQGSYDERYMLPHQP.

Residues 1–12 are compositionally biased toward basic residues; the sequence is METRSSKTRRSL. Disordered stretches follow at residues 1–39, 1339–1360, and 1529–1553; these read METR…PSQP, PGPS…GSSS, and SQDG…EETA. The segment covering 30 to 39 has biased composition (low complexity); it reads PAGSSSPSQP.

Interacts with alpha- and beta-tubulin. Interacts with BBS2, BBS4, BBS5, MKKS, TCP1, CCT2, CCT3, CCT4, CCT5 and CCT7. Expressed in all tissues examined. Expression is highest in prostate and testis.

It is found in the cytoplasm. Essential for spermatogenesis and male fertility. May play an important role in sperm head and tail formation. May act as a tumor suppressor by inhibiting cell proliferation. The protein is Deleted in lung and esophageal cancer protein 1 of Homo sapiens (Human).